The chain runs to 643 residues: UPF0313 protein CLD_0573 (643 aa).

One can recognise a Radical SAM core domain in the interval 295 to 566; that stretch reads AIKEVKFSIT…RMQRALLQFS (272 aa). The [4Fe-4S] cluster site is built by Cys309, Cys313, and Cys316. The segment at 598–643 is disordered; that stretch reads NKPYKKSHKKNNAKNNNNHYNKNNNKNKDISKKNKKNSLSKHKKRK. Residues 600 to 609 are compositionally biased toward basic residues; the sequence is PYKKSHKKNN. Over residues 610–621 the composition is skewed to low complexity; that stretch reads AKNNNNHYNKNN. A compositionally biased stretch (basic residues) spans 630-643; sequence KNKKNSLSKHKKRK.

The protein belongs to the UPF0313 family. It depends on [4Fe-4S] cluster as a cofactor.

The sequence is that of UPF0313 protein CLD_0573 from Clostridium botulinum (strain Okra / Type B1).